Here is a 295-residue protein sequence, read N- to C-terminus: Nucleotide-binding protein Sare_3328 (295 aa).

Position 19–26 (19–26 (GVSGGGRS)) interacts with ATP. 70-73 (DVRS) contributes to the GTP binding site.

It belongs to the RapZ-like family.

Displays ATPase and GTPase activities. This is Nucleotide-binding protein Sare_3328 from Salinispora arenicola (strain CNS-205).